The following is a 335-amino-acid chain: Urokinase plasminogen activator surface receptor (335 aa).

A signal peptide spans 1–22; it reads MGHPPLLPLLLLLHTCVPASWG. UPAR/Ly6 domains are found at residues 23 to 114, 115 to 213, and 214 to 305; these read LRCM…RSRY, LECI…PQNG, and RQCY…YRSG. 3 disulfides stabilise this stretch: cysteine 25–cysteine 46, cysteine 28–cysteine 34, and cysteine 39–cysteine 67. Asparagine 74 is a glycosylation site (N-linked (GlcNAc...) asparagine). Cystine bridges form between cysteine 93–cysteine 98, cysteine 117–cysteine 144, cysteine 120–cysteine 127, cysteine 137–cysteine 169, cysteine 175–cysteine 192, cysteine 193–cysteine 198, cysteine 216–cysteine 244, cysteine 219–cysteine 227, cysteine 237–cysteine 263, cysteine 269–cysteine 287, and cysteine 288–cysteine 293. 4 N-linked (GlcNAc...) asparagine glycosylation sites follow: asparagine 184, asparagine 194, asparagine 222, and asparagine 255. Residue glycine 305 is the site of GPI-anchor amidated glycine attachment. A propeptide spans 306-335 (removed in mature form); sequence AAPQPGPAHLSLTITLLMTARLWGGTLLWT.

Monomer. Interacts with MRC2. Interacts (via the UPAR/Ly6 domains) with SRPX2. Interacts with FAP (seprase); the interaction occurs at the cell surface of invadopodia membrane. Interacts with SORL1 (via N-terminal ectodomain); this interaction decreases PLAUR internalization. The ternary complex composed of PLAUR-PLAU-SERPINE1 also interacts with SORL1. Interacts with CD82; this interaction prevents PLAUR from binding to its high affinity ligand PLAU. As to expression, expressed in neurons of the rolandic area of the brain (at protein level). Expressed in the brain.

It localises to the cell membrane. The protein resides in the cell projection. It is found in the invadopodium membrane. The protein localises to the secreted. Its function is as follows. Acts as a receptor for urokinase plasminogen activator. Plays a role in localizing and promoting plasmin formation. Mediates the proteolysis-independent signal transduction activation effects of U-PA. It is subject to negative-feedback regulation by U-PA which cleaves it into an inactive form. The polypeptide is Urokinase plasminogen activator surface receptor (PLAUR) (Homo sapiens (Human)).